A 355-amino-acid polypeptide reads, in one-letter code: Phosphate acyltransferase (355 aa).

It belongs to the PlsX family. In terms of assembly, homodimer. Probably interacts with PlsY.

It localises to the cytoplasm. The catalysed reaction is a fatty acyl-[ACP] + phosphate = an acyl phosphate + holo-[ACP]. It functions in the pathway lipid metabolism; phospholipid metabolism. Catalyzes the reversible formation of acyl-phosphate (acyl-PO(4)) from acyl-[acyl-carrier-protein] (acyl-ACP). This enzyme utilizes acyl-ACP as fatty acyl donor, but not acyl-CoA. This is Phosphate acyltransferase from Azorhizobium caulinodans (strain ATCC 43989 / DSM 5975 / JCM 20966 / LMG 6465 / NBRC 14845 / NCIMB 13405 / ORS 571).